The sequence spans 449 residues: Phosphoglucosamine mutase (449 aa).

The Phosphoserine intermediate role is filled by serine 101. Mg(2+)-binding residues include serine 101, aspartate 243, aspartate 245, and aspartate 247. Position 101 is a phosphoserine (serine 101).

It belongs to the phosphohexose mutase family. Mg(2+) serves as cofactor. Activated by phosphorylation.

It catalyses the reaction alpha-D-glucosamine 1-phosphate = D-glucosamine 6-phosphate. In terms of biological role, catalyzes the conversion of glucosamine-6-phosphate to glucosamine-1-phosphate. This chain is Phosphoglucosamine mutase, found in Syntrophobacter fumaroxidans (strain DSM 10017 / MPOB).